The sequence spans 235 residues: Phosphoribosylaminoimidazole-succinocarboxamide synthase (235 aa).

This sequence belongs to the SAICAR synthetase family.

The enzyme catalyses 5-amino-1-(5-phospho-D-ribosyl)imidazole-4-carboxylate + L-aspartate + ATP = (2S)-2-[5-amino-1-(5-phospho-beta-D-ribosyl)imidazole-4-carboxamido]succinate + ADP + phosphate + 2 H(+). Its pathway is purine metabolism; IMP biosynthesis via de novo pathway; 5-amino-1-(5-phospho-D-ribosyl)imidazole-4-carboxamide from 5-amino-1-(5-phospho-D-ribosyl)imidazole-4-carboxylate: step 1/2. The chain is Phosphoribosylaminoimidazole-succinocarboxamide synthase from Prosthecochloris aestuarii (strain DSM 271 / SK 413).